Here is a 127-residue protein sequence, read N- to C-terminus: MTLTYPEDLQYLDSHEYLRLEGDTATLGISAFAVDQLGDIVFVELPAVGDALEPGERFGTIESVKAVEDLYAPLGGTVIAVNQAVIDNPEQIAADPYGEGWLVKVQVSTLPTGLLSAADYRALVEGS.

One can recognise a Lipoyl-binding domain in the interval threonine 24–glutamine 106. Position 65 is an N6-lipoyllysine (lysine 65).

Belongs to the GcvH family. As to quaternary structure, the glycine cleavage system is composed of four proteins: P, T, L and H. (R)-lipoate is required as a cofactor.

Its function is as follows. The glycine cleavage system catalyzes the degradation of glycine. The H protein shuttles the methylamine group of glycine from the P protein to the T protein. In Thermosynechococcus vestitus (strain NIES-2133 / IAM M-273 / BP-1), this protein is Glycine cleavage system H protein.